The following is a 400-amino-acid chain: MSFVKDFKPQALGDTNLFKPIKIGNNELLHRAVIPPLTRMRALHPGNIPNRDWAVEYYTQRAQRPGTMIITEGAFISPQAGGYDNAPGVWSEEQMVEWTKIFNAIHEKKSFVWVQLWVLGWAAFPDNLARDGLRYDSASDNVFMDAEQEAKAKKANNPQHSLTKDEIKQYIKEYVQAAKNSIAAGADGVEIHSANGYLLNQFLDPHSNTRTDEYGGSIENRARFTLEVVDALVEAIGHEKVGLRLSPYGVFNSMSGGAETGIVAQYAYVAGELEKRAKAGKRLAFVHLVEPRVTNPFLTEGEGEYEGGSNDFVYSIWKGPVIRAGNFALHPEVVREEVKDKRTLIGYGRFFISNPDLVDRLEKGLPLNKYDRDTFYQMSAHGYIDYPTYEEALKLGWDKK.

FMN is bound by residues threonine 38 and glutamine 115. 2 residues coordinate substrate: histidine 192 and asparagine 195. Residue tyrosine 197 is the Proton donor of the active site. Residues arginine 244 and arginine 349 each coordinate FMN. Residue tyrosine 376 participates in substrate binding.

Homodimer or heterodimer. The cofactor is FMN.

It carries out the reaction A + NADPH + H(+) = AH2 + NADP(+). Functionally, flavin-dependent enoate reductase that catalyzes the chemo- and stereoslective hydrogenation of electron-poor alkenes. The enzyme is reduced by NADPH, and oxygen, quinones, and alpha,beta-unsaturated aldehydes and ketones can act as electron acceptors to complete catalytic turnover. The physiological oxidant remains elusive. This Saccharomyces pastorianus (Lager yeast) protein is NADPH dehydrogenase 1.